The primary structure comprises 816 residues: Lon protease (816 aa).

One can recognise a Lon N-terminal domain in the interval 40–244; that stretch reads VPLIAVPSHP…KVLELLYEEL (205 aa). 398–405 lines the ATP pocket; that stretch reads GPPGVGKT. In terms of domain architecture, Lon proteolytic spans 636–816; that stretch reads AMSPGMVMGL…SMKEVIKLLF (181 aa). Residues S724 and K767 contribute to the active site.

The protein belongs to the peptidase S16 family. As to quaternary structure, homohexamer. Organized in a ring with a central cavity.

The protein localises to the cytoplasm. It catalyses the reaction Hydrolysis of proteins in presence of ATP.. In terms of biological role, ATP-dependent serine protease that mediates the selective degradation of mutant and abnormal proteins as well as certain short-lived regulatory proteins. Required for cellular homeostasis and for survival from DNA damage and developmental changes induced by stress. Degrades polypeptides processively to yield small peptide fragments that are 5 to 10 amino acids long. Binds to DNA in a double-stranded, site-specific manner. The chain is Lon protease from Borrelia duttonii (strain Ly).